Consider the following 254-residue polypeptide: Phosphoribosylaminoimidazole-succinocarboxamide synthase (254 aa).

This sequence belongs to the SAICAR synthetase family.

It carries out the reaction 5-amino-1-(5-phospho-D-ribosyl)imidazole-4-carboxylate + L-aspartate + ATP = (2S)-2-[5-amino-1-(5-phospho-beta-D-ribosyl)imidazole-4-carboxamido]succinate + ADP + phosphate + 2 H(+). It functions in the pathway purine metabolism; IMP biosynthesis via de novo pathway; 5-amino-1-(5-phospho-D-ribosyl)imidazole-4-carboxamide from 5-amino-1-(5-phospho-D-ribosyl)imidazole-4-carboxylate: step 1/2. The polypeptide is Phosphoribosylaminoimidazole-succinocarboxamide synthase (Sinorhizobium fredii (strain NBRC 101917 / NGR234)).